Here is a 169-residue protein sequence, read N- to C-terminus: MFGLTTLAANKLPLGNMLFIIISFLVLMVILKKVAYGPLTKVLDERAEKISTDIDGAESARQEAENLAAQRQSELADTRQQATKVVADAKASAQKQSDALVAVAAERANTINQQAQTDAEKLKEDAIANAKNDVAALSVAIASKLMQKELSLNDQQALIDAYISDLETK.

A helical membrane pass occupies residues Lys11–Leu31.

This sequence belongs to the ATPase B chain family. As to quaternary structure, F-type ATPases have 2 components, F(1) - the catalytic core - and F(0) - the membrane proton channel. F(1) has five subunits: alpha(3), beta(3), gamma(1), delta(1), epsilon(1). F(0) has three main subunits: a(1), b(2) and c(10-14). The alpha and beta chains form an alternating ring which encloses part of the gamma chain. F(1) is attached to F(0) by a central stalk formed by the gamma and epsilon chains, while a peripheral stalk is formed by the delta and b chains.

The protein localises to the cell membrane. Its function is as follows. F(1)F(0) ATP synthase produces ATP from ADP in the presence of a proton or sodium gradient. F-type ATPases consist of two structural domains, F(1) containing the extramembraneous catalytic core and F(0) containing the membrane proton channel, linked together by a central stalk and a peripheral stalk. During catalysis, ATP synthesis in the catalytic domain of F(1) is coupled via a rotary mechanism of the central stalk subunits to proton translocation. In terms of biological role, component of the F(0) channel, it forms part of the peripheral stalk, linking F(1) to F(0). This Leuconostoc citreum (strain KM20) protein is ATP synthase subunit b.